A 201-amino-acid polypeptide reads, in one-letter code: Potassium-transporting ATPase KdpC subunit (201 aa).

The chain crosses the membrane as a helical span at residues 7–27; sequence PALVLLVALTAITGLAYPLAV.

This sequence belongs to the KdpC family. The system is composed of three essential subunits: KdpA, KdpB and KdpC.

It localises to the cell inner membrane. Part of the high-affinity ATP-driven potassium transport (or Kdp) system, which catalyzes the hydrolysis of ATP coupled with the electrogenic transport of potassium into the cytoplasm. This subunit acts as a catalytic chaperone that increases the ATP-binding affinity of the ATP-hydrolyzing subunit KdpB by the formation of a transient KdpB/KdpC/ATP ternary complex. In Methylorubrum extorquens (strain CM4 / NCIMB 13688) (Methylobacterium extorquens), this protein is Potassium-transporting ATPase KdpC subunit.